We begin with the raw amino-acid sequence, 599 residues long: DNA primase (599 aa).

Residues C38–C62 form a CHC2-type zinc finger. The Toprim domain maps to N250 to P332. Mg(2+) contacts are provided by E256, D300, and D302.

The protein belongs to the DnaG primase family. As to quaternary structure, monomer. Interacts with DnaB. Zn(2+) serves as cofactor. The cofactor is Mg(2+).

It catalyses the reaction ssDNA + n NTP = ssDNA/pppN(pN)n-1 hybrid + (n-1) diphosphate.. Its function is as follows. RNA polymerase that catalyzes the synthesis of short RNA molecules used as primers for DNA polymerase during DNA replication. The chain is DNA primase from Rickettsia bellii (strain RML369-C).